We begin with the raw amino-acid sequence, 241 residues long: 2,3,4,5-tetrahydropyridine-2,6-dicarboxylate N-acetyltransferase (241 aa).

This sequence belongs to the transferase hexapeptide repeat family. DapH subfamily.

It catalyses the reaction (S)-2,3,4,5-tetrahydrodipicolinate + acetyl-CoA + H2O = L-2-acetamido-6-oxoheptanedioate + CoA. Its pathway is amino-acid biosynthesis; L-lysine biosynthesis via DAP pathway; LL-2,6-diaminopimelate from (S)-tetrahydrodipicolinate (acetylase route): step 1/3. In terms of biological role, catalyzes the transfer of an acetyl group from acetyl-CoA to tetrahydrodipicolinate. This is 2,3,4,5-tetrahydropyridine-2,6-dicarboxylate N-acetyltransferase from Caldanaerobacter subterraneus subsp. tengcongensis (strain DSM 15242 / JCM 11007 / NBRC 100824 / MB4) (Thermoanaerobacter tengcongensis).